Here is a 371-residue protein sequence, read N- to C-terminus: DNA replication and repair protein RecF (371 aa).

30–37 (GENAQGKT) is an ATP binding site.

It belongs to the RecF family.

It is found in the cytoplasm. The RecF protein is involved in DNA metabolism; it is required for DNA replication and normal SOS inducibility. RecF binds preferentially to single-stranded, linear DNA. It also seems to bind ATP. The sequence is that of DNA replication and repair protein RecF from Lysinibacillus sphaericus (strain C3-41).